A 777-amino-acid chain; its full sequence is ATPase ARSA1 (777 aa).

110 to 117 is a binding site for ATP; the sequence is KGGVGKTS. D139 is a catalytic residue. ATP contacts are provided by residues N372 and 454–461; that span reads KGGVGKTS. D483 is an active-site residue. N712 is a binding site for ATP.

Belongs to the arsA ATPase family. Monomer. Interacts with TOC34.

It localises to the cytoplasm. The protein localises to the cytosol. In terms of biological role, ATPase required for the post-translational delivery of tail-anchored (TA) proteins to the chloroplast. Required for the accumulation of TOC34, an essential component of the outer chloroplast membrane translocon (TOC) complex. Recognizes and selectively binds the transmembrane domain of TA proteins in the cytosol. This complex then targets to chloroplast, where the tail-anchored protein is released for insertion. This process is regulated by ATP binding and hydrolysis. The sequence is that of ATPase ARSA1 from Chlamydomonas reinhardtii (Chlamydomonas smithii).